The sequence spans 535 residues: MTKYIFVTGGVVSSLGKGIVAASLGRLLKNRGMSVTIQKFDPYINVDPGTMSPYQHGEVFVTDDGAETDLDLGHYERFIDINLNRFSNVTTGKIYSAVLKKERRGDYLGGTVQVIPHITNELKDRVYRAGKETNADVVITEIGGTVGDIESLPFLEAIRQMKSDIGHENVMYIHCTLVPYIKAAGELKTKPTQHSVKELRSLGIQPNIIVVRTEMPISQDMKDKIALFCDIDTKAVIECEDADNLYSIPLNLQEQGLDKLVCDHMKLECKDPDMTEWKDLVTKVKNLSKTITISLVGKYVELQDAYISVVESLRHAGYAFDADVKIKWINAEEVTESNIQELTGGTDGIIVPGGFGDRGVEGKIIAAKYARENKIPFFGICLGMQIASIEYARNVLGLEGAHSAEIDPSTPYPIIDLLPEQKDVEDLGGTLRLGLYPCKLQEDTKAFEAYADEVVYERHRHRYEFNNEYRQQMEENGFVFSGTSPDGRLVEIIELKDHPWYVACQFHPEFKSRPTRPQPLFKDFIGASVQAAEQK.

An amidoligase domain region spans residues 1–267 (MTKYIFVTGG…DKLVCDHMKL (267 aa)). Position 13 (Ser13) interacts with CTP. Ser13 is a binding site for UTP. 14-19 (SLGKGI) contacts ATP. Tyr54 provides a ligand contact to L-glutamine. Asp71 lines the ATP pocket. Mg(2+)-binding residues include Asp71 and Glu141. CTP contacts are provided by residues 148 to 150 (DIE), 188 to 193 (KTKPTQ), and Lys224. UTP contacts are provided by residues 188–193 (KTKPTQ) and Lys224. The 243-residue stretch at 292-534 (TISLVGKYVE…IGASVQAAEQ (243 aa)) folds into the Glutamine amidotransferase type-1 domain. An L-glutamine-binding site is contributed by Gly354. Cys381 functions as the Nucleophile; for glutamine hydrolysis in the catalytic mechanism. L-glutamine-binding positions include 382–385 (LGMQ), Glu405, and Arg462. Active-site residues include His507 and Glu509.

It belongs to the CTP synthase family. Homotetramer.

The enzyme catalyses UTP + L-glutamine + ATP + H2O = CTP + L-glutamate + ADP + phosphate + 2 H(+). It carries out the reaction L-glutamine + H2O = L-glutamate + NH4(+). It catalyses the reaction UTP + NH4(+) + ATP = CTP + ADP + phosphate + 2 H(+). Its pathway is pyrimidine metabolism; CTP biosynthesis via de novo pathway; CTP from UDP: step 2/2. With respect to regulation, allosterically activated by GTP, when glutamine is the substrate; GTP has no effect on the reaction when ammonia is the substrate. The allosteric effector GTP functions by stabilizing the protein conformation that binds the tetrahedral intermediate(s) formed during glutamine hydrolysis. Inhibited by the product CTP, via allosteric rather than competitive inhibition. Catalyzes the ATP-dependent amination of UTP to CTP with either L-glutamine or ammonia as the source of nitrogen. Regulates intracellular CTP levels through interactions with the four ribonucleotide triphosphates. The polypeptide is CTP synthase (Bacillus velezensis (strain DSM 23117 / BGSC 10A6 / LMG 26770 / FZB42) (Bacillus amyloliquefaciens subsp. plantarum)).